Consider the following 83-residue polypeptide: Mu-theraphotoxin-Hhn2j 3 (83 aa).

The first 21 residues, 1-21 (MKALMFLALAGLVLLFVVGYA), serve as a signal peptide directing secretion. The propeptide occupies 22 to 48 (SESEEKEFPIELLSKIFAVDVFKGEER). 3 disulfides stabilise this stretch: Cys-50–Cys-65, Cys-57–Cys-70, and Cys-64–Cys-77. Residue Leu-81 is modified to Leucine amide.

Belongs to the neurotoxin 10 (Hwtx-1) family. 15 (Hntx-3) subfamily. Monomer. As to expression, expressed by the venom gland.

Its subcellular location is the secreted. Its function is as follows. Lethal neurotoxin. Selectively blocks tetrodotoxin-sensitive voltage-gated sodium channels (Nav). Does not affect tetrodotoxin-resistant voltage-gated sodium channels or calcium channels. The chain is Mu-theraphotoxin-Hhn2j 3 from Cyriopagopus hainanus (Chinese bird spider).